The sequence spans 292 residues: Protease HtpX homolog (292 aa).

The next 2 helical transmembrane spans lie at 4–24 (ILLF…VASL) and 39–59 (GALL…SLLI). His-144 lines the Zn(2+) pocket. The active site involves Glu-145. His-148 contributes to the Zn(2+) binding site. Transmembrane regions (helical) follow at residues 159–179 (LIQG…GYAV) and 199–219 (VTTI…VAWF). Zn(2+) is bound at residue Glu-224.

The protein belongs to the peptidase M48B family. The cofactor is Zn(2+).

The protein resides in the cell inner membrane. In Verminephrobacter eiseniae (strain EF01-2), this protein is Protease HtpX homolog.